A 217-amino-acid chain; its full sequence is Biogenesis of lysosome-related organelles complex 1 subunit 4 (217 aa).

The segment at 1–57 is disordered; it reads MEGSFSDGGALPEGLAEEAEPQGAAWSGDSGTVSQSHSSASGPWEDEGAEDGAPGRD. The segment covering 29–41 has biased composition (polar residues); that stretch reads DSGTVSQSHSSAS. Positions 136 to 165 form a coiled coil; that stretch reads DRLEAFVRMVGGRVARMEEQVTKAEAELGT. Thr-165 bears the Phosphothreonine mark.

It belongs to the BLOC1S4 family. Interacts with BLOC1S5 and BLOC1S6. Component of the biogenesis of lysosome-related organelles complex 1 (BLOC-1) composed of BLOC1S1, BLOC1S2, BLOC1S3, BLOC1S4, BLOC1S5, BLOC1S6, DTNBP1/BLOC1S7 and SNAPIN/BLOC1S8. Octamer composed of one copy each BLOC1S1, BLOC1S2, BLOC1S3, BLOC1S4, BLOC1S5, BLOC1S6, DTNBP1/BLOC1S7 and SNAPIN/BLOC1S8. The BLOC-1 complex associates with the AP-3 protein complex and membrane protein cargos.

The protein resides in the cytoplasm. Functionally, component of the BLOC-1 complex, a complex that is required for normal biogenesis of lysosome-related organelles (LRO), such as platelet dense granules and melanosomes. In concert with the AP-3 complex, the BLOC-1 complex is required to target membrane protein cargos into vesicles assembled at cell bodies for delivery into neurites and nerve terminals. The BLOC-1 complex, in association with SNARE proteins, is also proposed to be involved in neurite extension. Plays a role in intracellular vesicle trafficking. This is Biogenesis of lysosome-related organelles complex 1 subunit 4 (BLOC1S4) from Homo sapiens (Human).